A 463-amino-acid polypeptide reads, in one-letter code: L-seryl-tRNA(Sec) selenium transferase (463 aa).

N6-(pyridoxal phosphate)lysine is present on Lys-295.

This sequence belongs to the SelA family. In terms of assembly, homodecamer; pentamer of dimers. Binds only one seryl-tRNA(Sec) per dimer. The cofactor is pyridoxal 5'-phosphate.

The protein localises to the cytoplasm. The enzyme catalyses L-seryl-tRNA(Sec) + selenophosphate + H(+) = L-selenocysteinyl-tRNA(Sec) + phosphate. Its pathway is aminoacyl-tRNA biosynthesis; selenocysteinyl-tRNA(Sec) biosynthesis; selenocysteinyl-tRNA(Sec) from L-seryl-tRNA(Sec) (bacterial route): step 1/1. In terms of biological role, converts seryl-tRNA(Sec) to selenocysteinyl-tRNA(Sec) required for selenoprotein biosynthesis. The sequence is that of L-seryl-tRNA(Sec) selenium transferase from Salmonella dublin (strain CT_02021853).